Reading from the N-terminus, the 280-residue chain is 4-diphosphocytidyl-2-C-methyl-D-erythritol kinase (280 aa).

Lys8 is a catalytic residue. Residue Pro91–Ser101 coordinates ATP. Asp133 is an active-site residue.

This sequence belongs to the GHMP kinase family. IspE subfamily.

The catalysed reaction is 4-CDP-2-C-methyl-D-erythritol + ATP = 4-CDP-2-C-methyl-D-erythritol 2-phosphate + ADP + H(+). It functions in the pathway isoprenoid biosynthesis; isopentenyl diphosphate biosynthesis via DXP pathway; isopentenyl diphosphate from 1-deoxy-D-xylulose 5-phosphate: step 3/6. Catalyzes the phosphorylation of the position 2 hydroxy group of 4-diphosphocytidyl-2C-methyl-D-erythritol. This chain is 4-diphosphocytidyl-2-C-methyl-D-erythritol kinase, found in Clostridium kluyveri (strain NBRC 12016).